Here is a 211-residue protein sequence, read N- to C-terminus: 3-demethoxyubiquinol 3-hydroxylase (211 aa).

Fe cation-binding residues include Glu-60, Glu-90, His-93, Glu-142, Glu-174, and His-177.

The protein belongs to the COQ7 family. Fe cation is required as a cofactor.

The protein localises to the cell membrane. It catalyses the reaction a 5-methoxy-2-methyl-3-(all-trans-polyprenyl)benzene-1,4-diol + AH2 + O2 = a 3-demethylubiquinol + A + H2O. It participates in cofactor biosynthesis; ubiquinone biosynthesis. Catalyzes the hydroxylation of 2-nonaprenyl-3-methyl-6-methoxy-1,4-benzoquinol during ubiquinone biosynthesis. This chain is 3-demethoxyubiquinol 3-hydroxylase, found in Herminiimonas arsenicoxydans.